The following is a 201-amino-acid chain: MAAPVRRSVVFVTGNAKKLEEVTQILGDSSPYTLVARKIDLPEYQGEPDEISVQKCREAARQIRGPVIVEDTCLCFNALGGLPGPYIKWFLEKLKPEGLYKLLAGFEDKSAYALCTFAFSTGNPEEPVKLFKGQTHGVIVEPRGPRDFGWDPCFQPDGYDQTYAELPKAVKNSISHRYRALSELSAFFLQSNPTEAPSSPS.

13–18 (TGNAKK) is a binding site for ITP. E43 serves as a coordination point for Mg(2+). Residues K55, 71-72 (DT), K88, 148-151 (FGWD), K171, and 176-177 (HR) each bind ITP.

Belongs to the HAM1 NTPase family. As to quaternary structure, homodimer. Mg(2+) serves as cofactor. The cofactor is Mn(2+).

The protein localises to the cytoplasm. It carries out the reaction ITP + H2O = IMP + diphosphate + H(+). It catalyses the reaction dITP + H2O = dIMP + diphosphate + H(+). The enzyme catalyses XTP + H2O = XMP + diphosphate + H(+). The catalysed reaction is N(6)-hydroxy-dATP + H2O = N(6)-hydroxy-dAMP + diphosphate + H(+). Its function is as follows. Pyrophosphatase that hydrolyzes the non-canonical purine nucleotides inosine triphosphate (ITP), deoxyinosine triphosphate (dITP) as well as 2'-deoxy-N-6-hydroxylaminopurine triphosphate (dHAPTP) and xanthosine 5'-triphosphate (XTP) to their respective monophosphate derivatives. The enzyme does not distinguish between the deoxy- and ribose forms. Probably excludes non-canonical purines from RNA and DNA precursor pools, thus preventing their incorporation into RNA and DNA and avoiding chromosomal lesions. This chain is Inosine triphosphate pyrophosphatase, found in Gallus gallus (Chicken).